The chain runs to 310 residues: Alpha/beta hydrolase domain-containing protein 17C (310 aa).

Catalysis depends on charge relay system residues Ser192, Asp257, and His286.

Belongs to the AB hydrolase superfamily. ABHD17 family. Palmitoylated on cysteine residues located in a cysteine cluster at the N-terminus which promotes membrane localization.

The protein resides in the recycling endosome membrane. It localises to the cell projection. The protein localises to the dendritic spine. Its subcellular location is the postsynaptic density membrane. It catalyses the reaction S-hexadecanoyl-L-cysteinyl-[protein] + H2O = L-cysteinyl-[protein] + hexadecanoate + H(+). In terms of biological role, hydrolyzes fatty acids from S-acylated cysteine residues in proteins. This chain is Alpha/beta hydrolase domain-containing protein 17C, found in Xenopus tropicalis (Western clawed frog).